Reading from the N-terminus, the 190-residue chain is Peptidyl-tRNA hydrolase (190 aa).

Y18 serves as a coordination point for tRNA. Residue H23 is the Proton acceptor of the active site. 3 residues coordinate tRNA: F69, N71, and N117.

It belongs to the PTH family. Monomer.

It is found in the cytoplasm. The enzyme catalyses an N-acyl-L-alpha-aminoacyl-tRNA + H2O = an N-acyl-L-amino acid + a tRNA + H(+). Its function is as follows. Hydrolyzes ribosome-free peptidyl-tRNAs (with 1 or more amino acids incorporated), which drop off the ribosome during protein synthesis, or as a result of ribosome stalling. Functionally, catalyzes the release of premature peptidyl moieties from peptidyl-tRNA molecules trapped in stalled 50S ribosomal subunits, and thus maintains levels of free tRNAs and 50S ribosomes. The protein is Peptidyl-tRNA hydrolase of Rhodococcus jostii (strain RHA1).